Here is a 220-residue protein sequence, read N- to C-terminus: Inner membrane-spanning protein YciB (220 aa).

The next 6 membrane-spanning stretches (helical) occupy residues 20-40 (EVPP…FFFA), 57-77 (IGAP…IALA), 86-106 (LPIM…LTLW), 123-143 (LFGG…GYVF), 156-176 (KLTL…EIVW), and 187-207 (FKVW…MPLI).

It belongs to the YciB family.

The protein resides in the cell inner membrane. Plays a role in cell envelope biogenesis, maintenance of cell envelope integrity and membrane homeostasis. The sequence is that of Inner membrane-spanning protein YciB from Brucella melitensis biotype 2 (strain ATCC 23457).